The chain runs to 187 residues: Elongation factor P (187 aa).

This sequence belongs to the elongation factor P family.

It is found in the cytoplasm. The protein operates within protein biosynthesis; polypeptide chain elongation. Involved in peptide bond synthesis. Stimulates efficient translation and peptide-bond synthesis on native or reconstituted 70S ribosomes in vitro. Probably functions indirectly by altering the affinity of the ribosome for aminoacyl-tRNA, thus increasing their reactivity as acceptors for peptidyl transferase. This is Elongation factor P from Wolinella succinogenes (strain ATCC 29543 / DSM 1740 / CCUG 13145 / JCM 31913 / LMG 7466 / NCTC 11488 / FDC 602W) (Vibrio succinogenes).